The chain runs to 160 residues: Transmembrane protein 216 (160 aa).

4 consecutive transmembrane segments (helical) span residues tryptophan 41–leucine 61, leucine 68–tyrosine 88, leucine 101–leucine 121, and alanine 134–phenylalanine 154.

In terms of assembly, part of the tectonic-like complex (also named B9 complex).

It localises to the membrane. It is found in the cytoplasm. The protein resides in the cytoskeleton. Its subcellular location is the cilium basal body. In terms of biological role, part of the tectonic-like complex which is required for tissue-specific ciliogenesis and may regulate ciliary membrane composition. This is Transmembrane protein 216 (tmem216) from Danio rerio (Zebrafish).